Here is a 460-residue protein sequence, read N- to C-terminus: Argininosuccinate lyase (460 aa).

Belongs to the lyase 1 family. Argininosuccinate lyase subfamily.

Its subcellular location is the cytoplasm. The catalysed reaction is 2-(N(omega)-L-arginino)succinate = fumarate + L-arginine. It functions in the pathway amino-acid biosynthesis; L-arginine biosynthesis; L-arginine from L-ornithine and carbamoyl phosphate: step 3/3. The sequence is that of Argininosuccinate lyase from Leuconostoc mesenteroides subsp. mesenteroides (strain ATCC 8293 / DSM 20343 / BCRC 11652 / CCM 1803 / JCM 6124 / NCDO 523 / NBRC 100496 / NCIMB 8023 / NCTC 12954 / NRRL B-1118 / 37Y).